The following is a 79-amino-acid chain: Acyl carrier protein (79 aa).

The Carrier domain occupies 2–77; it reads SEIGERVKKI…DATKFLEKNA (76 aa). Serine 37 bears the O-(pantetheine 4'-phosphoryl)serine mark.

It belongs to the acyl carrier protein (ACP) family. In terms of processing, 4'-phosphopantetheine is transferred from CoA to a specific serine of apo-ACP by AcpS. This modification is essential for activity because fatty acids are bound in thioester linkage to the sulfhydryl of the prosthetic group.

It localises to the cytoplasm. Its pathway is lipid metabolism; fatty acid biosynthesis. Its function is as follows. Carrier of the growing fatty acid chain in fatty acid biosynthesis. This is Acyl carrier protein from Afipia carboxidovorans (strain ATCC 49405 / DSM 1227 / KCTC 32145 / OM5) (Oligotropha carboxidovorans).